The following is a 112-amino-acid chain: C-C motif chemokine 27 (112 aa).

An N-terminal signal peptide occupies residues methionine 1 to alanine 24. 2 disulfide bridges follow: cysteine 33–cysteine 62 and cysteine 34–cysteine 77.

It belongs to the intercrine beta (chemokine CC) family. In terms of assembly, monomer, dimer, and tetramer. Heparin avidly promotes oligomerization. Interacts with TNFAIP6 (via Link domain). In terms of tissue distribution, testis, thymus, placenta, ovary and skin.

It localises to the secreted. Functionally, chemotactic factor that attracts skin-associated memory T-lymphocytes. May play a role in mediating homing of lymphocytes to cutaneous sites. Binds to CCR10. This Homo sapiens (Human) protein is C-C motif chemokine 27 (CCL27).